Here is an 836-residue protein sequence, read N- to C-terminus: Protein O-mannosyl-transferase TMTC2 (836 aa).

Residues 1–21 form a helical membrane-spanning segment; the sequence is MIAELVSSALGLALYLNTLSA. At 22 to 84 the chain is on the extracellular side; sequence DFCYDDSRAI…LNHAIGGLNP (63 aa). A helical membrane pass occupies residues 85–105; that stretch reads WSYHLVNVLLHAAVTGLFTSF. The Cytoplasmic portion of the chain corresponds to 106–107; it reads SK. A helical transmembrane segment spans residues 108–128; it reads ILLGDGYWTFMAGLMFASHPI. Over 129-132 the chain is Extracellular; the sequence is HTEA. Residues 133–153 traverse the membrane as a helical segment; sequence VAGIVGRADVGASLFFLLSLL. Topologically, residues 154-162 are cytoplasmic; it reads CYIKHCSTR. The next 2 helical transmembrane spans lie at 163–184 and 185–204; these read GYSA…CSML and WKEQ…VFVF. The Cytoplasmic portion of the chain corresponds to 205-220; that stretch reads HRLKIKQILPTIYKRK. The helical transmembrane segment at 221-241 threads the bilayer; that stretch reads NLSLFLSISLLIFWGSSLLGA. Residues 242 to 312 lie on the Extracellular side of the membrane; the sequence is RLYWMGNKPP…KTVCDWRNLH (71 aa). Residues 313–333 traverse the membrane as a helical segment; sequence TVAFYTGLLLLAYYGLKSPSV. Over 334 to 399 the chain is Cytoplasmic; it reads DRECNGKTVT…TENIVVLSLS (66 aa). Residues 400–420 traverse the membrane as a helical segment; that stretch reads LLIIPFVPATNLFFYVGFVIA. Residues 421-422 lie on the Extracellular side of the membrane; the sequence is ER. The chain crosses the membrane as a helical span at residues 423–443; it reads VLYIPSMGFCLLITVGARALY. Residues 444 to 449 lie on the Cytoplasmic side of the membrane; sequence VKVQKR. The helical transmembrane segment at 450 to 470 threads the bilayer; sequence FLKSLIFYATATLIVFYGLKT. The Extracellular segment spans residues 471 to 836; sequence AIRNGDWQNE…EKQGLKTSKT (366 aa). TPR repeat units lie at residues 493–526, 527–560, 561–594, 606–639, 643–676, 677–710, 711–744, 745–778, and 779–812; these read AKAW…RSNM, ADML…RPTL, ASAY…PDEN, TSCL…MPRQ, QSLY…KTDH, IPAH…DPTK, GNCY…DSTE, FDVV…RPNY, and PAAL…KPDD.

This sequence belongs to the TMTC family.

The protein localises to the membrane. Its subcellular location is the endoplasmic reticulum. It carries out the reaction a di-trans,poly-cis-dolichyl beta-D-mannosyl phosphate + L-seryl-[protein] = 3-O-(alpha-D-mannosyl)-L-seryl-[protein] + a di-trans,poly-cis-dolichyl phosphate + H(+). It catalyses the reaction a di-trans,poly-cis-dolichyl beta-D-mannosyl phosphate + L-threonyl-[protein] = 3-O-(alpha-D-mannosyl)-L-threonyl-[protein] + a di-trans,poly-cis-dolichyl phosphate + H(+). Its pathway is protein modification; protein glycosylation. In terms of biological role, transfers mannosyl residues to the hydroxyl group of serine or threonine residues. The 4 members of the TMTC family are O-mannosyl-transferases dedicated primarily to the cadherin superfamily, each member seems to have a distinct role in decorating the cadherin domains with O-linked mannose glycans at specific regions. Also acts as O-mannosyl-transferase on other proteins such as PDIA3. The chain is Protein O-mannosyl-transferase TMTC2 from Homo sapiens (Human).